A 224-amino-acid polypeptide reads, in one-letter code: Deoxyribose-phosphate aldolase (224 aa).

Catalysis depends on Asp-92, which acts as the Proton donor/acceptor. Lys-155 (schiff-base intermediate with acetaldehyde) is an active-site residue. Catalysis depends on Lys-184, which acts as the Proton donor/acceptor.

The protein belongs to the DeoC/FbaB aldolase family. DeoC type 1 subfamily.

The protein resides in the cytoplasm. It catalyses the reaction 2-deoxy-D-ribose 5-phosphate = D-glyceraldehyde 3-phosphate + acetaldehyde. Its pathway is carbohydrate degradation; 2-deoxy-D-ribose 1-phosphate degradation; D-glyceraldehyde 3-phosphate and acetaldehyde from 2-deoxy-alpha-D-ribose 1-phosphate: step 2/2. In terms of biological role, catalyzes a reversible aldol reaction between acetaldehyde and D-glyceraldehyde 3-phosphate to generate 2-deoxy-D-ribose 5-phosphate. This Clostridium perfringens (strain ATCC 13124 / DSM 756 / JCM 1290 / NCIMB 6125 / NCTC 8237 / Type A) protein is Deoxyribose-phosphate aldolase.